The primary structure comprises 169 residues: Secreted RxLR effector protein BLN03 (169 aa).

A signal peptide spans 1-21; the sequence is MRPRKYIVVVLLSIAYTMCLA. A dEER motif is present at residues 51–54; that stretch reads TEER. A helical transmembrane segment spans residues 149–169; it reads GSAFLFVIGFIVLLAFAMTAV.

Belongs to the RxLR effector family. In terms of assembly, interacts with host transcription factor NAC069.

It localises to the secreted. Its subcellular location is the host membrane. Secreted effector that inhibits stress-induced relocalization of the endoplasmic reticulum tail-anchored transcription factors to the nucleus, thus affecting stress responses. In Bremia lactucae (Lettuce downy mildew), this protein is Secreted RxLR effector protein BLN03.